A 157-amino-acid chain; its full sequence is 2-C-methyl-D-erythritol 2,4-cyclodiphosphate synthase (157 aa).

A divalent metal cation-binding residues include D9 and H11. 4-CDP-2-C-methyl-D-erythritol 2-phosphate contacts are provided by residues 9–11 (DVH) and 35–36 (HS). H43 lines the a divalent metal cation pocket. Residues 57 to 59 (DIG), 62 to 66 (FPETD), 133 to 136 (TTME), F140, and K143 each bind 4-CDP-2-C-methyl-D-erythritol 2-phosphate.

The protein belongs to the IspF family. As to quaternary structure, homotrimer. It depends on a divalent metal cation as a cofactor.

The enzyme catalyses 4-CDP-2-C-methyl-D-erythritol 2-phosphate = 2-C-methyl-D-erythritol 2,4-cyclic diphosphate + CMP. Its pathway is isoprenoid biosynthesis; isopentenyl diphosphate biosynthesis via DXP pathway; isopentenyl diphosphate from 1-deoxy-D-xylulose 5-phosphate: step 4/6. In terms of biological role, involved in the biosynthesis of isopentenyl diphosphate (IPP) and dimethylallyl diphosphate (DMAPP), two major building blocks of isoprenoid compounds. Catalyzes the conversion of 4-diphosphocytidyl-2-C-methyl-D-erythritol 2-phosphate (CDP-ME2P) to 2-C-methyl-D-erythritol 2,4-cyclodiphosphate (ME-CPP) with a corresponding release of cytidine 5-monophosphate (CMP). In Enterococcus faecalis (strain ATCC 700802 / V583), this protein is 2-C-methyl-D-erythritol 2,4-cyclodiphosphate synthase.